Here is a 371-residue protein sequence, read N- to C-terminus: Putative glutamate--cysteine ligase 2 (371 aa).

The protein belongs to the glutamate--cysteine ligase type 2 family. YbdK subfamily.

It carries out the reaction L-cysteine + L-glutamate + ATP = gamma-L-glutamyl-L-cysteine + ADP + phosphate + H(+). In terms of biological role, ATP-dependent carboxylate-amine ligase which exhibits weak glutamate--cysteine ligase activity. The chain is Putative glutamate--cysteine ligase 2 from Cupriavidus taiwanensis (strain DSM 17343 / BCRC 17206 / CCUG 44338 / CIP 107171 / LMG 19424 / R1) (Ralstonia taiwanensis (strain LMG 19424)).